The chain runs to 319 residues: MRVLTGLQPSGDLHIGNYFGAIKQMVDAQEKSQMFMFIANYHAMTSSQDGEKLKQNSLKAAAAFLSLGIDPQKSVFWLQSDVKEVMELYWILSQFTPMGLLERAHSYKDKVAKGLSASHGLFSYPVLMAADILLFDTRIVPVGKDQIQHVEIARDIALKVNNEWGEIFTLPEARVNEEVAVVVGTDGAKMSKSYQNTIDIFSSEKTLKKQISSIVTDSTALEDPKDHENCNIFKIAKLFLDESGQKELQIRYEKGGEGYGHFKIYLNELVNAYFKEAREKYNELLEKPSHLKEILDFGATKARKIAQEKMQKIYEKIGL.

Residues 8-10 (QPS) and 16-17 (GN) each bind ATP. The 'HIGH' region signature appears at 9-17 (PSGDLHIGN). Position 131 (D131) interacts with L-tryptophan. ATP-binding positions include 143–145 (GKD), V182, and 189–193 (KMSKS). The 'KMSKS' region motif lies at 189 to 193 (KMSKS).

The protein belongs to the class-I aminoacyl-tRNA synthetase family. In terms of assembly, homodimer.

It is found in the cytoplasm. The enzyme catalyses tRNA(Trp) + L-tryptophan + ATP = L-tryptophyl-tRNA(Trp) + AMP + diphosphate + H(+). Functionally, catalyzes the attachment of tryptophan to tRNA(Trp). This is Tryptophan--tRNA ligase from Campylobacter jejuni subsp. jejuni serotype O:2 (strain ATCC 700819 / NCTC 11168).